The following is a 1032-amino-acid chain: Reticulon-3 (1032 aa).

The span at M1–A24 shows a compositional bias: low complexity. Residues M1 to L61 are disordered. A2 carries the N-acetylalanine modification. At A2–T863 the chain is on the cytoplasmic side. The residue at position 30 (S30) is a Phosphoserine. Residues G32–L61 are compositionally biased toward low complexity. Phosphoserine is present on residues S229, S243, S246, S283, S316, and S453. A compositionally biased stretch (basic and acidic residues) spans C545–Q568. Positions C545–P617 are disordered. Residues T605 to P617 are compositionally biased toward polar residues. Residues S649 and S650 each carry the phosphoserine modification. Residues N696–K715 show a composition bias toward basic and acidic residues. Positions N696–F726 are disordered. At S735 the chain carries Phosphoserine. Residues V844 to E1032 form the Reticulon domain. Residues L864–L887 constitute an intramembrane region (helical). Over S888–R947 the chain is Cytoplasmic. Residues L948–T968 constitute an intramembrane region (helical). The Cytoplasmic segment spans residues Y969–A972. An intramembrane region (helical) is located at residues V973 to V993. The interaction with FADD stretch occupies residues I987–E1032. Topologically, residues Y994–E1032 are cytoplasmic. Residues Q1000–D1002 are interaction with BACE1.

In terms of assembly, homodimer. Interacts with ATL1. Interacts with RTN4. Isoform 3 interacts with BACE1, BACE2, BCL2 and FADD. Interacts with ATL2. Interacts with TMEM33. Interacts with ZFYVE27 and with KIF5A in a ZFYVE27-dependent manner. Interacts with RIGI. Interacts with TRIM25. As to quaternary structure, (Microbial infection) Interacts with Coxsackievirus A16, enterovirus 71 and poliovirus P2C proteins. (Microbial infection) Interacts with West Nile virus protein NS4A. As to expression, isoform 3 is widely expressed, with highest levels in brain, where it is enriched in neuronal cell bodies from gray matter (at protein level). Three times more abundant in macula than in peripheral retina. Isoform 1 is expressed at high levels in brain and at low levels in skeletal muscle. Isoform 2 is only found in melanoma.

The protein localises to the endoplasmic reticulum membrane. It is found in the golgi apparatus membrane. Functionally, may be involved in membrane trafficking in the early secretory pathway. Inhibits BACE1 activity and amyloid precursor protein processing. May induce caspase-8 cascade and apoptosis. May favor BCL2 translocation to the mitochondria upon endoplasmic reticulum stress. Induces the formation of endoplasmic reticulum tubules. Also acts as an inflammation-resolving regulator by interacting with both TRIM25 and RIGI, subsequently impairing RIGI 'Lys-63'-linked polyubiquitination leading to IRF3 and NF-kappa-B inhibition. (Microbial infection) Plays a positive role in viral replication and pathogenesis of enteroviruses. This Homo sapiens (Human) protein is Reticulon-3 (RTN3).